The sequence spans 101 residues: Urease subunit beta (101 aa).

Belongs to the urease beta subunit family. As to quaternary structure, heterotrimer of UreA (gamma), UreB (beta) and UreC (alpha) subunits. Three heterotrimers associate to form the active enzyme.

Its subcellular location is the cytoplasm. The catalysed reaction is urea + 2 H2O + H(+) = hydrogencarbonate + 2 NH4(+). Its pathway is nitrogen metabolism; urea degradation; CO(2) and NH(3) from urea (urease route): step 1/1. This is Urease subunit beta from Burkholderia orbicola (strain MC0-3).